A 407-amino-acid chain; its full sequence is Putative nickel insertion protein (407 aa).

This sequence belongs to the LarC family.

This chain is Putative nickel insertion protein, found in Gloeothece citriformis (strain PCC 7424) (Cyanothece sp. (strain PCC 7424)).